Consider the following 200-residue polypeptide: Chromophore lyase CpcS/CpeS (200 aa).

The protein belongs to the CpcS/CpeS biliprotein lyase family.

Its function is as follows. Covalently attaches a chromophore to Cys residue(s) of phycobiliproteins. This chain is Chromophore lyase CpcS/CpeS, found in Synechococcus sp. (strain WH8020).